A 360-amino-acid polypeptide reads, in one-letter code: NAD(P)H-quinone oxidoreductase subunit 1, chloroplastic (360 aa).

Transmembrane regions (helical) follow at residues F30–L50, F98–F118, F127–M147, A165–L185, F203–L223, F253–V273, I297–I317, and F340–L360.

Belongs to the complex I subunit 1 family. In terms of assembly, NDH is composed of at least 16 different subunits, 5 of which are encoded in the nucleus.

The protein localises to the plastid. It localises to the chloroplast thylakoid membrane. The enzyme catalyses a plastoquinone + NADH + (n+1) H(+)(in) = a plastoquinol + NAD(+) + n H(+)(out). It carries out the reaction a plastoquinone + NADPH + (n+1) H(+)(in) = a plastoquinol + NADP(+) + n H(+)(out). In terms of biological role, NDH shuttles electrons from NAD(P)H:plastoquinone, via FMN and iron-sulfur (Fe-S) centers, to quinones in the photosynthetic chain and possibly in a chloroplast respiratory chain. The immediate electron acceptor for the enzyme in this species is believed to be plastoquinone. Couples the redox reaction to proton translocation, and thus conserves the redox energy in a proton gradient. The protein is NAD(P)H-quinone oxidoreductase subunit 1, chloroplastic of Aethionema cordifolium (Lebanon stonecress).